Consider the following 337-residue polypeptide: Ketol-acid reductoisomerase (NADP(+)) (337 aa).

In terms of domain architecture, KARI N-terminal Rossmann spans 3–183 (VEMFYDDDAD…GGTRAGVIKT (181 aa)). Residues 26 to 29 (YGSQ), S52, S54, and 84 to 87 (DTAQ) contribute to the NADP(+) site. H109 is a catalytic residue. G135 contacts NADP(+). The KARI C-terminal knotted domain occupies 184–329 (TFKEETETDL…AKLRGLMSWV (146 aa)). Mg(2+) contacts are provided by D192, E196, E228, and E232. S253 contacts substrate.

The protein belongs to the ketol-acid reductoisomerase family. The cofactor is Mg(2+).

The enzyme catalyses (2R)-2,3-dihydroxy-3-methylbutanoate + NADP(+) = (2S)-2-acetolactate + NADPH + H(+). It catalyses the reaction (2R,3R)-2,3-dihydroxy-3-methylpentanoate + NADP(+) = (S)-2-ethyl-2-hydroxy-3-oxobutanoate + NADPH + H(+). The protein operates within amino-acid biosynthesis; L-isoleucine biosynthesis; L-isoleucine from 2-oxobutanoate: step 2/4. It participates in amino-acid biosynthesis; L-valine biosynthesis; L-valine from pyruvate: step 2/4. In terms of biological role, involved in the biosynthesis of branched-chain amino acids (BCAA). Catalyzes an alkyl-migration followed by a ketol-acid reduction of (S)-2-acetolactate (S2AL) to yield (R)-2,3-dihydroxy-isovalerate. In the isomerase reaction, S2AL is rearranged via a Mg-dependent methyl migration to produce 3-hydroxy-3-methyl-2-ketobutyrate (HMKB). In the reductase reaction, this 2-ketoacid undergoes a metal-dependent reduction by NADPH to yield (R)-2,3-dihydroxy-isovalerate. In Nocardia farcinica (strain IFM 10152), this protein is Ketol-acid reductoisomerase (NADP(+)).